The chain runs to 235 residues: Ribosomal RNA large subunit methyltransferase E (235 aa).

5 residues coordinate S-adenosyl-L-methionine: Gly76, Trp78, Asp99, Asp115, and Asp139. Lys179 (proton acceptor) is an active-site residue.

It belongs to the class I-like SAM-binding methyltransferase superfamily. RNA methyltransferase RlmE family.

It localises to the cytoplasm. It carries out the reaction uridine(2552) in 23S rRNA + S-adenosyl-L-methionine = 2'-O-methyluridine(2552) in 23S rRNA + S-adenosyl-L-homocysteine + H(+). In terms of biological role, specifically methylates the uridine in position 2552 of 23S rRNA at the 2'-O position of the ribose in the fully assembled 50S ribosomal subunit. This is Ribosomal RNA large subunit methyltransferase E from Rhodopseudomonas palustris (strain BisA53).